The sequence spans 356 residues: Protein RecA (356 aa).

An ATP-binding site is contributed by 67-74 (GPESSGKT).

It belongs to the RecA family.

The protein localises to the cytoplasm. In terms of biological role, can catalyze the hydrolysis of ATP in the presence of single-stranded DNA, the ATP-dependent uptake of single-stranded DNA by duplex DNA, and the ATP-dependent hybridization of homologous single-stranded DNAs. It interacts with LexA causing its activation and leading to its autocatalytic cleavage. This chain is Protein RecA, found in Yersinia pestis (strain Pestoides F).